The following is an 88-amino-acid chain: Phosphocarrier protein HPr (88 aa).

The HPr domain maps to 1 to 88 (MEKRDFHVVA…ETMKKEGLSE (88 aa)). Residue histidine 15 is the Pros-phosphohistidine intermediate of the active site. The residue at position 46 (serine 46) is a Phosphoserine; by HPrK/P.

It belongs to the HPr family.

Its subcellular location is the cytoplasm. Its activity is regulated as follows. Phosphorylation on Ser-46 inhibits the phosphoryl transfer from enzyme I to HPr. In terms of biological role, general (non sugar-specific) component of the phosphoenolpyruvate-dependent sugar phosphotransferase system (sugar PTS). This major carbohydrate active-transport system catalyzes the phosphorylation of incoming sugar substrates concomitantly with their translocation across the cell membrane. The phosphoryl group from phosphoenolpyruvate (PEP) is transferred to the phosphoryl carrier protein HPr by enzyme I. Phospho-HPr then transfers it to the PTS EIIA domain. Its function is as follows. P-Ser-HPr interacts with the catabolite control protein A (CcpA), forming a complex that binds to DNA at the catabolite response elements cre, operator sites preceding a large number of catabolite-regulated genes. Thus, P-Ser-HPr is a corepressor in carbon catabolite repression (CCR), a mechanism that allows bacteria to coordinate and optimize the utilization of available carbon sources. P-Ser-HPr also plays a role in inducer exclusion, in which it probably interacts with several non-PTS permeases and inhibits their transport activity. The chain is Phosphocarrier protein HPr (ptsH) from Latilactobacillus sakei (Lactobacillus sakei).